A 475-amino-acid chain; its full sequence is D(1B) dopamine receptor (475 aa).

Residues 1 to 38 (MLPPGRNRTAQPARLGLQRQLAQVDAPAGSATPLGPAQ) are Extracellular-facing. A glycan (N-linked (GlcNAc...) asparagine) is linked at asparagine 7. Residues 39 to 64 (VVTAGLLTLLIVWTLLGNVLVCAAIV) form a helical membrane-spanning segment. At 65-75 (RSRHLRAKMTN) the chain is on the cytoplasmic side. The chain crosses the membrane as a helical span at residues 76-102 (IFIVSLAVSDLFVALLVMPWKAVAEVA). Over 103–111 (GYWPFGTFC) the chain is Extracellular. A disulfide bond links cysteine 111 and cysteine 211. Residues 112–134 (DIWVAFDIMCSTASILNLCIISV) form a helical membrane-spanning segment. Over 135-153 (DRYWAISRPFRYERKMTQR) the chain is Cytoplasmic. A helical transmembrane segment spans residues 154-179 (VALVMVGLAWTLSILISFIPVQLNWH). At 180–215 (RDKAGSQGQEGLLSNGTPWEEGWELEGRTENCDSSL) the chain is on the extracellular side. A helical membrane pass occupies residues 216-240 (NRTYAISSSLISFYIPVAIMIVTYT). The Cytoplasmic portion of the chain corresponds to 241-289 (RIYRIAQVQIRRISSLERAAEHAQSCRSRGAYEPDPSLRASIKKETKVF). A helical transmembrane segment spans residues 290-317 (KTLSMIMGVFVCCWLPFFILNCMVPFCS). Over 318 to 335 (SGDAEGPKTGFPCVSETT) the chain is Extracellular. Residues 336-357 (FDIFVWFGWANSSLNPIIYAFN) form a helical membrane-spanning segment. Residues 358 to 475 (ADFRKVFAQL…LTPNCFDKTA (118 aa)) lie on the Cytoplasmic side of the membrane. Residue cysteine 370 is the site of S-palmitoyl cysteine attachment. The disordered stretch occupies residues 415–443 (SGDREVGEEEEEGPFDHMSQISPTTPDGD).

It belongs to the G-protein coupled receptor 1 family. As to expression, brain, in the lateral mammillary nuclei, the anterior pretectal nuclei, and several layers of the hippocampus.

The protein resides in the cell membrane. In terms of biological role, dopamine receptor whose activity is mediated by G proteins which activate adenylyl cyclase. This chain is D(1B) dopamine receptor (Drd5), found in Rattus norvegicus (Rat).